Consider the following 325-residue polypeptide: Pyruvate dehydrogenase E1 component subunit beta (325 aa).

E60 lines the thiamine diphosphate pocket.

As to quaternary structure, heterodimer of an alpha and a beta chain. Thiamine diphosphate serves as cofactor.

The protein localises to the cytoplasm. The protein resides in the secreted. The enzyme catalyses N(6)-[(R)-lipoyl]-L-lysyl-[protein] + pyruvate + H(+) = N(6)-[(R)-S(8)-acetyldihydrolipoyl]-L-lysyl-[protein] + CO2. With respect to regulation, activity of the E1 module is inhibited by the pyruvate dehydrogenase inhibitor PdhI. In terms of biological role, the pyruvate dehydrogenase complex catalyzes the overall conversion of pyruvate to acetyl-CoA and CO(2). It contains multiple copies of three enzymatic components: pyruvate dehydrogenase (E1), dihydrolipoamide acetyltransferase (E2) and lipoamide dehydrogenase (E3). The B.subtilis PDH complex also possesses branched-chain 2-oxoacid dehydrogenase (BCDH) activity. The protein is Pyruvate dehydrogenase E1 component subunit beta of Bacillus subtilis (strain 168).